A 218-amino-acid chain; its full sequence is N-(5'-phosphoribosyl)anthranilate isomerase (218 aa).

Belongs to the TrpF family.

The catalysed reaction is N-(5-phospho-beta-D-ribosyl)anthranilate = 1-(2-carboxyphenylamino)-1-deoxy-D-ribulose 5-phosphate. It functions in the pathway amino-acid biosynthesis; L-tryptophan biosynthesis; L-tryptophan from chorismate: step 3/5. In Halalkalibacterium halodurans (strain ATCC BAA-125 / DSM 18197 / FERM 7344 / JCM 9153 / C-125) (Bacillus halodurans), this protein is N-(5'-phosphoribosyl)anthranilate isomerase.